A 248-amino-acid chain; its full sequence is Type II restriction enzyme XhoI (248 aa).

The protein belongs to the XhoI type II restriction endonuclease family.

The enzyme catalyses Endonucleolytic cleavage of DNA to give specific double-stranded fragments with terminal 5'-phosphates.. Functionally, a P subtype restriction enzyme that recognizes the double-stranded sequence 5'-CTCGAG-3' and cleaves after C-1. The protein is Type II restriction enzyme XhoI of Xanthomonas vasicola.